The chain runs to 207 residues: Small ribosomal subunit protein uS4 (207 aa).

The disordered stretch occupies residues 31 to 55; sequence KCKLDSKPGQHGRTSGARTSDYGTQ. The span at 42 to 53 shows a compositional bias: polar residues; the sequence is GRTSGARTSDYG. The region spanning 97–160 is the S4 RNA-binding domain; that stretch reads SRLDNVVYRM…KKQARIIEAL (64 aa).

Belongs to the universal ribosomal protein uS4 family. Part of the 30S ribosomal subunit. Contacts protein S5. The interaction surface between S4 and S5 is involved in control of translational fidelity.

One of the primary rRNA binding proteins, it binds directly to 16S rRNA where it nucleates assembly of the body of the 30S subunit. In terms of biological role, with S5 and S12 plays an important role in translational accuracy. The protein is Small ribosomal subunit protein uS4 of Burkholderia multivorans (strain ATCC 17616 / 249).